The chain runs to 538 residues: Putative cysteine ligase BshC (538 aa).

The stretch at 248–268 (ISKYKEVQEGLRNQQEVIKEL) forms a coiled coil.

Belongs to the BshC family.

Involved in bacillithiol (BSH) biosynthesis. May catalyze the last step of the pathway, the addition of cysteine to glucosamine malate (GlcN-Mal) to generate BSH. The protein is Putative cysteine ligase BshC of Bacillus cereus (strain B4264).